The chain runs to 398 residues: Sex hormone-binding globulin (398 aa).

An N-terminal signal peptide occupies residues 1-31 (MATPPLVPLLLLLLLLLPHAHHRLALRSVLA). 2 consecutive Laminin G-like domains span residues 41 to 213 (VHLI…RRSC) and 220 to 386 (GIFF…THSC). 2 disulfide bridges follow: Cys-189-Cys-213 and Cys-358-Cys-386. 2 N-linked (GlcNAc...) asparagine glycosylation sites follow: Asn-376 and Asn-392.

As to quaternary structure, homodimer.

Its subcellular location is the secreted. Functionally, functions as an androgen transport protein, but may also be involved in receptor mediated processes. Each dimer binds one molecule of steroid. Specific for 5-alpha-dihydrotestosterone, testosterone, and 17-beta-estradiol. Regulates the plasma metabolic clearance rate of steroid hormones by controlling their plasma concentration. In Oryctolagus cuniculus (Rabbit), this protein is Sex hormone-binding globulin (SHBG).